The chain runs to 29 residues: Glucagon (29 aa).

Ser2 is subject to Phosphoserine.

This sequence belongs to the glucagon family.

Its subcellular location is the secreted. Functionally, glucagon plays a key role in glucose metabolism and homeostasis. Regulates blood glucose by increasing gluconeogenesis and decreasing glycolysis. In Chinchilla chinchilla (Short-tailed chinchilla), this protein is Glucagon (GCG).